The primary structure comprises 260 residues: Thiamine thiazole synthase (260 aa).

NAD(+) is bound by residues Ala-36, 55–56, Gly-63, and 154–156; these read EQ and HVD. Residues Asp-156 and His-171 each coordinate Fe cation. Met-224 lines the NAD(+) pocket. Arg-234 is a glycine binding site.

This sequence belongs to the THI4 family. In terms of assembly, homooctamer; tetramer of dimers. Requires Fe(2+) as cofactor.

The enzyme catalyses hydrogen sulfide + glycine + NAD(+) = ADP-5-ethyl-4-methylthiazole-2-carboxylate + nicotinamide + 3 H2O + H(+). The protein operates within cofactor biosynthesis; thiamine diphosphate biosynthesis. In terms of biological role, involved in the biosynthesis of the thiazole moiety of thiamine. Catalyzes the conversion of NAD and glycine to adenosine diphosphate 5-(2-hydroxyethyl)-4-methylthiazole-2-carboxylate (ADT), an adenylated thiazole intermediate, using free sulfide as a source of sulfur. The protein is Thiamine thiazole synthase of Methanosarcina mazei (strain ATCC BAA-159 / DSM 3647 / Goe1 / Go1 / JCM 11833 / OCM 88) (Methanosarcina frisia).